We begin with the raw amino-acid sequence, 98 residues long: Large ribosomal subunit protein uL23 (98 aa).

It belongs to the universal ribosomal protein uL23 family. In terms of assembly, part of the 50S ribosomal subunit. Contacts protein L29, and trigger factor when it is bound to the ribosome.

One of the early assembly proteins it binds 23S rRNA. One of the proteins that surrounds the polypeptide exit tunnel on the outside of the ribosome. Forms the main docking site for trigger factor binding to the ribosome. This Lactobacillus delbrueckii subsp. bulgaricus (strain ATCC 11842 / DSM 20081 / BCRC 10696 / JCM 1002 / NBRC 13953 / NCIMB 11778 / NCTC 12712 / WDCM 00102 / Lb 14) protein is Large ribosomal subunit protein uL23.